The sequence spans 883 residues: N,N'-diacetylchitobiase (883 aa).

The signal sequence occupies residues 1–17 (MLKHSLIAASVITTLAG). The N-palmitoyl cysteine moiety is linked to residue Cys18. Cys18 carries the S-diacylglycerol cysteine lipid modification. Intrachain disulfides connect Cys54–Cys64, Cys394–Cys402, and Cys502–Cys577. Catalysis depends on Glu537, which acts as the Proton donor.

Belongs to the glycosyl hydrolase 20 family. This protein is probably a lipoprotein, its processing is inhibited by globomycin.

The protein resides in the cell outer membrane. It catalyses the reaction Hydrolysis of terminal non-reducing N-acetyl-D-hexosamine residues in N-acetyl-beta-D-hexosaminides.. It functions in the pathway glycan degradation; chitin degradation. In terms of biological role, hydrolysis of terminal, non-reducing N-acetyl-beta-D-glucosamine residues in chitobiose and higher analogs, and in glycoproteins. This Vibrio harveyi (Beneckea harveyi) protein is N,N'-diacetylchitobiase (chb).